A 189-amino-acid polypeptide reads, in one-letter code: GTPase HRas (189 aa).

A GTP-binding site is contributed by 10-17; sequence GARGVGKS. Positions 32–40 match the Effector region motif; the sequence is YDPTIEDSY. GTP is bound by residues 57–61 and 116–119; these read DTAGQ and NKCD. S-palmitoyl cysteine; by host attachment occurs at residues C181 and C184. C186 bears the Cysteine methyl ester; by host mark. Residue C186 is the site of S-farnesyl cysteine; by host attachment. A propeptide spans 187-189 (removed in mature form); the sequence is VLS.

This sequence belongs to the small GTPase superfamily. Ras family.

It is found in the host cell membrane. The catalysed reaction is GTP + H2O = GDP + phosphate + H(+). Alternates between an inactive form bound to GDP and an active form bound to GTP. Activated by a guanine nucleotide-exchange factor (GEF) and inactivated by a GTPase-activating protein (GAP). The chain is GTPase HRas (H-RAS) from Mus musculus (Mouse).